The chain runs to 388 residues: Processive diacylglycerol beta-glucosyltransferase (388 aa).

This sequence belongs to the glycosyltransferase 28 family. UgtP subfamily.

Its subcellular location is the cell membrane. The enzyme catalyses a 1,2-diacyl-3-O-(beta-D-glucopyranosyl)-sn-glycerol + UDP-alpha-D-glucose = a 1,2-diacyl-3-O-(beta-D-Glc-(1-&gt;6)-beta-D-Glc)-sn-glycerol + UDP + H(+). It carries out the reaction a 1,2-diacyl-3-O-(beta-D-Glc-(1-&gt;6)-beta-D-Glc)-sn-glycerol + UDP-alpha-D-glucose = a 1,2-diacyl-3-O-(beta-D-Glc-(1-&gt;6)-beta-D-Glc-(1-&gt;6)-beta-D-Glc)-sn-glycerol + UDP + H(+). The catalysed reaction is a 1,2-diacyl-sn-glycerol + UDP-alpha-D-glucose = a 1,2-diacyl-3-O-(beta-D-glucopyranosyl)-sn-glycerol + UDP + H(+). Its pathway is glycolipid metabolism; diglucosyl-diacylglycerol biosynthesis. Functionally, processive glucosyltransferase involved in the biosynthesis of both the bilayer- and non-bilayer-forming membrane glucolipids. Is able to successively transfer up to three glucosyl residues to diacylglycerol (DAG), thereby catalyzing the formation of beta-monoglucosyl-DAG (3-O-(beta-D-glucopyranosyl)-1,2-diacyl-sn-glycerol), beta-diglucosyl-DAG (3-O-(beta-D-glucopyranosyl-beta-(1-&gt;6)-D-glucopyranosyl)-1,2-diacyl-sn-glycerol) and beta-triglucosyl-DAG (3-O-(beta-D-glucopyranosyl-beta-(1-&gt;6)-D-glucopyranosyl-beta-(1-&gt;6)-D-glucopyranosyl)-1,2-diacyl-sn-glycerol). Beta-diglucosyl-DAG is the predominant glycolipid found in Bacillales and is also used as a membrane anchor for lipoteichoic acid (LTA). The sequence is that of Processive diacylglycerol beta-glucosyltransferase from Bacillus cereus (strain G9842).